A 181-amino-acid chain; its full sequence is Transcription antitermination protein NusB (181 aa).

The interval Met-1–Asn-36 is disordered.

It belongs to the NusB family.

Functionally, involved in transcription antitermination. Required for transcription of ribosomal RNA (rRNA) genes. Binds specifically to the boxA antiterminator sequence of the ribosomal RNA (rrn) operons. The protein is Transcription antitermination protein NusB of Variovorax paradoxus (strain S110).